Consider the following 426-residue polypeptide: Gamma-glutamyl phosphate reductase (426 aa).

The protein belongs to the gamma-glutamyl phosphate reductase family.

The protein resides in the cytoplasm. The catalysed reaction is L-glutamate 5-semialdehyde + phosphate + NADP(+) = L-glutamyl 5-phosphate + NADPH + H(+). Its pathway is amino-acid biosynthesis; L-proline biosynthesis; L-glutamate 5-semialdehyde from L-glutamate: step 2/2. Its function is as follows. Catalyzes the NADPH-dependent reduction of L-glutamate 5-phosphate into L-glutamate 5-semialdehyde and phosphate. The product spontaneously undergoes cyclization to form 1-pyrroline-5-carboxylate. This Sorangium cellulosum (strain So ce56) (Polyangium cellulosum (strain So ce56)) protein is Gamma-glutamyl phosphate reductase.